Here is a 96-residue protein sequence, read N- to C-terminus: Small ribosomal subunit protein bS6 (96 aa).

This sequence belongs to the bacterial ribosomal protein bS6 family.

In terms of biological role, binds together with bS18 to 16S ribosomal RNA. The polypeptide is Small ribosomal subunit protein bS6 (Thermobifida fusca (strain YX)).